The sequence spans 569 residues: ABC1 family protein MCP2 (569 aa).

A mitochondrion-targeting transit peptide spans 1 to 18; it reads MMTKAFFNKLPFEVFRRY. Topologically, residues 19–34 are mitochondrial matrix; sequence VRTGKSIPQRSPRTRK. A helical transmembrane segment spans residues 35–51; the sequence is SLLVGGTIASAVVLYNF. Over 52 to 569 the chain is Mitochondrial intermembrane; it reads NDTFHDSVKH…KFIPKTWLSS (518 aa).

This sequence belongs to the protein kinase superfamily. ADCK protein kinase family.

The protein localises to the mitochondrion. The protein resides in the mitochondrion inner membrane. Component of MIOREX complexes, large expressome-like assemblies of ribosomes with factors involved in all the steps of post-transcriptional gene expression. Involved in mitochondrial lipid homeostasis. This is ABC1 family protein MCP2 from Saccharomyces cerevisiae (strain ATCC 204508 / S288c) (Baker's yeast).